The chain runs to 553 residues: Hydroxylamine reductase (553 aa).

Positions 3, 6, 18, and 25 each coordinate [2Fe-2S] cluster. Positions 249, 273, 317, 405, 433, 459, 493, and 495 each coordinate hybrid [4Fe-2O-2S] cluster. Cysteine persulfide is present on cysteine 405.

Belongs to the HCP family. [2Fe-2S] cluster is required as a cofactor. It depends on hybrid [4Fe-2O-2S] cluster as a cofactor.

The protein resides in the cytoplasm. It catalyses the reaction A + NH4(+) + H2O = hydroxylamine + AH2 + H(+). Functionally, catalyzes the reduction of hydroxylamine to form NH(3) and H(2)O. The chain is Hydroxylamine reductase from Actinobacillus succinogenes (strain ATCC 55618 / DSM 22257 / CCUG 43843 / 130Z).